The following is a 573-amino-acid chain: MSKGAAIIAYANPIFHIRHLKLESFLWNIIIRAIVHNVSSPQRHSPISVYLRMRNHRVSPDFHTFPFLLPSFHNPLHLPLGQRTHAQILLFGLDKDPFVRTSLLNMYSSCGDLRSAQRVFDDSGSKDLPAWNSVVNAYAKAGLIDDARKLFDEMPERNVISWSCLINGYVMCGKYKEALDLFREMQLPKPNEAFVRPNEFTMSTVLSACGRLGALEQGKWVHAYIDKYHVEIDIVLGTALIDMYAKCGSLERAKRVFNALGSKKDVKAYSAMICCLAMYGLTDECFQLFSEMTTSDNINPNSVTFVGILGACVHRGLINEGKSYFKMMIEEFGITPSIQHYGCMVDLYGRSGLIKEAESFIASMPMEPDVLIWGSLLSGSRMLGDIKTCEGALKRLIELDPMNSGAYVLLSNVYAKTGRWMEVKCIRHEMEVKGINKVPGCSYVEVEGVVHEFVVGDESQQESERIYAMLDEIMQRLREAGYVTDTKEVLLDLNEKDKEIALSYHSEKLAIAFCLMKTRPGTPVRIIKNLRICGDCHLVMKMISKLFSREIVVRDCNRFHHFRDGSCSCRDFW.

PPR repeat units follow at residues 23-60 (ESFLWNIIIRAIVHNVSSPQRHSPISVYLRMRNHRVSP), 61-95 (DFHTFPFLLPSFHNPLHLPLGQRTHAQILLFGLDK), 96-126 (DPFVRTSLLNMYSSCGDLRSAQRVFDDSGSK), 127-161 (DLPAWNSVVNAYAKAGLIDDARKLFDEMPERNVIS), 162-188 (WSCLINGYVMCGKYKEALDLFREMQLP), 198-232 (NEFTMSTVLSACGRLGALEQGKWVHAYIDKYHVEI), 233-263 (DIVLGTALIDMYAKCGSLERAKRVFNALGSK), 265-295 (DVKAYSAMICCLAMYGLTDECFQLFSEMTTS), 301-336 (NSVTFVGILGACVHRGLINEGKSYFKMMIEEFGITP), and 337-367 (SIQHYGCMVDLYGRSGLIKEAESFIASMPME). Residues 372-447 (IWGSLLSGSR…VPGCSYVEVE (76 aa)) are type E motif; degenerate. The segment at 448 to 478 (GVVHEFVVGDESQQESERIYAMLDEIMQRLR) is type E(+) motif. The segment at 479–573 (EAGYVTDTKE…DGSCSCRDFW (95 aa)) is type DYW motif.

Belongs to the PPR family. PCMP-H subfamily.

This chain is Pentatricopeptide repeat-containing protein At3g62890 (PCMP-H82), found in Arabidopsis thaliana (Mouse-ear cress).